We begin with the raw amino-acid sequence, 382 residues long: G-box-binding factor 3 (382 aa).

Residues 1-16 (MGNSSEEPKPPTKSDK) are compositionally biased toward basic and acidic residues. Disordered stretches follow at residues 1–26 (MGNS…DQTN), 97–221 (MGSL…GVKL), and 257–285 (EREL…AETE). A compositionally biased stretch (polar residues) spans 111–130 (TPGTLLSIDTPTKSTGNTDN). A compositionally biased stretch (basic and acidic residues) spans 155 to 165 (ADEHKRSRNSS). Positions 166–181 (ETDGSTDGSDGNTTGA) are enriched in low complexity. Residues 182 to 199 (DEPKLKRSREGTPTKDGK) are compositionally biased toward basic and acidic residues. Residues 202–216 (VQASSFHSVSPSSGD) show a composition bias toward polar residues. The bZIP domain occupies 259–322 (ELKRERRKQS…DKLRGANATL (64 aa)). A basic motif region spans residues 261–280 (KRERRKQSNRESARRSRLRK). The interval 287 to 322 (LARKVEALTAENMALRSELNQLNEKSDKLRGANATL) is leucine-zipper. The interval 329–382 (SEPEKRVPANMLSRVKNSGAGDKNKNQGDNDSNSTSKLHQLLDTKPRAKAVAAG) is disordered. Polar residues predominate over residues 357–366 (DNDSNSTSKL).

Belongs to the bZIP family. DNA-binding heterodimer. Interacts with GBF4. Interacts with BZIP16 and BZIP68. As to expression, present only in dark grown leaves and roots.

It is found in the nucleus. Functionally, binds to the G-box motif (5'-CCACGTGG-3') of the rbcS-1A gene promoter. G-box and G-box-like motifs are cis-acting elements defined in promoters of certain plant genes which are regulated by such diverse stimuli as light-induction or hormone control. The chain is G-box-binding factor 3 (GBF3) from Arabidopsis thaliana (Mouse-ear cress).